Reading from the N-terminus, the 134-residue chain is MDSDSTVTSLEENTENFCTNPTRDILAEGITNLFKPTIERLDERVASTIQLQAELRGQLDALAAQLRDIEKAQSQIPEFADKVKELLNVKHKVTVISNVLVTSQERLTGLHKLIEKEQRRRQALLDSALSTNIS.

Positions 50–124 (QLQAELRGQL…EKEQRRRQAL (75 aa)) form a coiled coil.

This sequence belongs to the SNAPIN family. As to quaternary structure, component of the biogenesis of lysosome-related organelles complex-1 (BLOC-1) composed of Blos1, Blos2, Blos3, Blos4, Dysb, Muted, Pldn and Snapin. Interacts with Blos2 and Dysb.

Its subcellular location is the membrane. The protein resides in the cytoplasm. It is found in the cytosol. Its function is as follows. Component of the biogenesis of lysosome-related organelles complex-1 (BLOC-1) involved in pigment granule biogenesis. May participate in the coupling of lysosomes to microtubule plus-end-directed kinesin motor. The sequence is that of SNAPIN protein homolog from Drosophila melanogaster (Fruit fly).